The chain runs to 248 residues: 4-hydroxy-tetrahydrodipicolinate reductase (248 aa).

NAD(+) contacts are provided by residues aspartate 32, 74–76 (GTT), and 99–102 (SANF). Catalysis depends on histidine 134, which acts as the Proton donor/acceptor. Histidine 135 contributes to the (S)-2,3,4,5-tetrahydrodipicolinate binding site. Lysine 138 acts as the Proton donor in catalysis. 144-145 (GT) serves as a coordination point for (S)-2,3,4,5-tetrahydrodipicolinate.

Belongs to the DapB family.

Its subcellular location is the cytoplasm. It carries out the reaction (S)-2,3,4,5-tetrahydrodipicolinate + NAD(+) + H2O = (2S,4S)-4-hydroxy-2,3,4,5-tetrahydrodipicolinate + NADH + H(+). The catalysed reaction is (S)-2,3,4,5-tetrahydrodipicolinate + NADP(+) + H2O = (2S,4S)-4-hydroxy-2,3,4,5-tetrahydrodipicolinate + NADPH + H(+). The protein operates within amino-acid biosynthesis; L-lysine biosynthesis via DAP pathway; (S)-tetrahydrodipicolinate from L-aspartate: step 4/4. Functionally, catalyzes the conversion of 4-hydroxy-tetrahydrodipicolinate (HTPA) to tetrahydrodipicolinate. The sequence is that of 4-hydroxy-tetrahydrodipicolinate reductase from Chlorobium luteolum (strain DSM 273 / BCRC 81028 / 2530) (Pelodictyon luteolum).